The chain runs to 88 residues: Small ribosomal subunit protein bS20 (88 aa).

The segment at 1 to 27 (MANSKSAKKRALQSEKRRQHNASRRSM) is disordered.

The protein belongs to the bacterial ribosomal protein bS20 family.

In terms of biological role, binds directly to 16S ribosomal RNA. This is Small ribosomal subunit protein bS20 from Shewanella oneidensis (strain ATCC 700550 / JCM 31522 / CIP 106686 / LMG 19005 / NCIMB 14063 / MR-1).